The chain runs to 445 residues: Rab GDP dissociation inhibitor beta (445 aa).

Met-1 carries the post-translational modification N-acetylmethionine. Position 57 is an N6-succinyllysine (Lys-57). Lys-112 is modified (N6-acetyllysine). A Phosphoserine modification is found at Ser-130. Lys-269 is subject to N6-acetyllysine. Ser-382 is modified (phosphoserine).

This sequence belongs to the Rab GDI family. In terms of assembly, interacts with RHOH. Interacts with the GDP-bound inactive forms of RAB3A, RAB3B, RAB3C, RAB5A, RAB5B, RAB5C, RAB8A, RAB8B, RAB10, RAB12, RAB35, and RAB43; binds RAB3D to a lesser extent. Interacts with DZIP1; this interaction negatively regulates the interaction of GDI2 with GDP-bound RAB8A.

It localises to the cytoplasm. The protein localises to the membrane. It is found in the golgi apparatus. Its subcellular location is the trans-Golgi network. GDP-dissociation inhibitor preventing the GDP to GTP exchange of most Rab proteins. By keeping these small GTPases in their inactive GDP-bound form regulates intracellular membrane trafficking. Negatively regulates protein transport to the cilium and ciliogenesis through the inhibition of RAB8A. In Pongo abelii (Sumatran orangutan), this protein is Rab GDP dissociation inhibitor beta (GDI2).